Consider the following 106-residue polypeptide: UPF0145 protein Pfl01_1745 (106 aa).

The protein belongs to the UPF0145 family.

In Pseudomonas fluorescens (strain Pf0-1), this protein is UPF0145 protein Pfl01_1745.